A 344-amino-acid polypeptide reads, in one-letter code: N-acetyl-gamma-glutamyl-phosphate reductase (344 aa).

The active site involves cysteine 150.

The protein belongs to the NAGSA dehydrogenase family. Type 1 subfamily.

Its subcellular location is the cytoplasm. It catalyses the reaction N-acetyl-L-glutamate 5-semialdehyde + phosphate + NADP(+) = N-acetyl-L-glutamyl 5-phosphate + NADPH + H(+). Its pathway is amino-acid biosynthesis; L-arginine biosynthesis; N(2)-acetyl-L-ornithine from L-glutamate: step 3/4. Its function is as follows. Catalyzes the NADPH-dependent reduction of N-acetyl-5-glutamyl phosphate to yield N-acetyl-L-glutamate 5-semialdehyde. The protein is N-acetyl-gamma-glutamyl-phosphate reductase of Pseudomonas entomophila (strain L48).